The following is a 519-amino-acid chain: uncharacterized protein (519 aa).

11 helical membrane passes run 52–72 (IYFL…VRGS), 86–106 (LATY…SPIV), 119–139 (TWVV…SYNV), 156–176 (WSFL…GWSL), 199–219 (FFLS…NTFI), 231–251 (LSGY…LVCF), 313–333 (MLSL…VYTG), 343–363 (IWLK…ILVY), 374–394 (VFFP…IQFV), 408–430 (IGGT…PQYV), and 477–497 (TSIV…TPVV).

Its subcellular location is the membrane. This is an uncharacterized protein from Schizosaccharomyces pombe (strain 972 / ATCC 24843) (Fission yeast).